The sequence spans 280 residues: CAG pathogenicity island protein 12 (280 aa).

The signal sequence occupies residues M1 to A20. C21 carries the N-palmitoyl cysteine lipid modification. A lipid anchor (S-diacylglycerol cysteine) is attached at C21.

It localises to the cell membrane. The chain is CAG pathogenicity island protein 12 (cagT) from Helicobacter pylori (strain ATCC 700392 / 26695) (Campylobacter pylori).